The primary structure comprises 221 residues: UPF0502 protein Sputcn32_1644 (221 aa).

Belongs to the UPF0502 family.

This chain is UPF0502 protein Sputcn32_1644, found in Shewanella putrefaciens (strain CN-32 / ATCC BAA-453).